The chain runs to 229 residues: uncharacterized protein (229 aa).

The segment at 1–41 (MRSAKVGVARQLETKKPQTGRKISTSSRGTIHSQQSQPEDI) is disordered. Polar residues predominate over residues 21 to 39 (RKISTSSRGTIHSQQSQPE). EF-hand domains follow at residues 48–83 (KELK…IGLH), 84–119 (ANKA…SQNI), 123–158 (TNEE…FGDF), and 159–193 (DDEL…YLLN). 13 residues coordinate Ca(2+): Asp61, Asp63, Ser65, Glu72, Asp97, Asp99, Asn101, Glu103, Glu108, Asp136, Asp138, Asn140, and Glu147. The span at 194 to 217 (DPKHDIDTGDSDVERYDDRHDDRA) shows a compositional bias: basic and acidic residues. A disordered region spans residues 194 to 229 (DPKHDIDTGDSDVERYDDRHDDRASPMPNHLSTVPE).

This is an uncharacterized protein from Caenorhabditis elegans.